A 311-amino-acid polypeptide reads, in one-letter code: tRNA-cytidine(32) 2-sulfurtransferase (311 aa).

A PP-loop motif motif is present at residues 47 to 52; the sequence is SGGKDS. C122, C125, and C213 together coordinate [4Fe-4S] cluster.

It belongs to the TtcA family. Homodimer. Requires Mg(2+) as cofactor. [4Fe-4S] cluster is required as a cofactor.

The protein resides in the cytoplasm. The catalysed reaction is cytidine(32) in tRNA + S-sulfanyl-L-cysteinyl-[cysteine desulfurase] + AH2 + ATP = 2-thiocytidine(32) in tRNA + L-cysteinyl-[cysteine desulfurase] + A + AMP + diphosphate + H(+). It functions in the pathway tRNA modification. Its function is as follows. Catalyzes the ATP-dependent 2-thiolation of cytidine in position 32 of tRNA, to form 2-thiocytidine (s(2)C32). The sulfur atoms are provided by the cysteine/cysteine desulfurase (IscS) system. The protein is tRNA-cytidine(32) 2-sulfurtransferase of Klebsiella pneumoniae subsp. pneumoniae (strain ATCC 700721 / MGH 78578).